The sequence spans 2372 residues: Nonribosomal peptide synthase roqA (2372 aa).

The segment at 217–610 is adenylation 1; the sequence is EHCRSQPDAE…VGRKDREVKI (394 aa). The disordered stretch occupies residues 723-745; sequence AASSHSSTREQPSNQRDKEDVEL. Residues 725–736 show a composition bias toward polar residues; sequence SSHSSTREQPSN. The 74-residue stretch at 750–823 folds into the Carrier 1 domain; sequence SAKENTLCSV…KIARCTAESK (74 aa). An O-(pantetheine 4'-phosphoryl)serine modification is found at Ser784. A condensation 1 region spans residues 856–1122; that stretch reads EDIYPCTPLQ…FATFPFRTQL (267 aa). Residues 1290–1679 are adenylation 2; the sequence is QPNSEAVCAW…VGRKDTQVKL (390 aa). The 77-residue stretch at 1819–1895 folds into the Carrier 2 domain; that stretch reads KPTTEQERFV…LFCKHVILIQ (77 aa). The residue at position 1856 (Ser1856) is an O-(pantetheine 4'-phosphoryl)serine. Residues 1962-2227 form a condensation 2 region; that stretch reads TSNYTSTAIF…FNVLPCRIAI (266 aa).

It participates in alkaloid biosynthesis. In terms of biological role, dipeptide synthase; part of the gene cluster that mediates the biosynthesis of the mycotoxins roquefortine C and meleagrin. The first stage is catalyzed by the dipeptide synthase roqA which condenses histidine and tryptophan to produce histidyltryptophanyldiketopiperazine (HTD). HTD is then converted to roquefortine C through two possible pathways. In the first pathway, prenyltransferase roqD transforms HTD to the intermediate roquefortine D, which is in turn converted to roquefortine C by the cytochrome P450 monooxygenase roqR. In the second pathway, HTD is first converted to the intermediate dehydrohistidyltryptophanyldi-ketopiperazine (DHTD) by roqR which is then prenylated by roqD to form roquefortine C. Roquefortine C can be further transformed to meleagrin via three more reactions including oxydation to glandicolin A by roqM, which is further reduced to glandicoline B by roqO. Finally, glandicoline B is converted to meleagrin by the glandicoline B O-methyltransferase roqN. More studies identified further branching and additional metabolites produced by the roquefortine/meleagrin cluster, including roquefortine F, roquefortine L, roquefortine M, roquefortine N and neoxaline. The chain is Nonribosomal peptide synthase roqA from Penicillium rubens (strain ATCC 28089 / DSM 1075 / NRRL 1951 / Wisconsin 54-1255) (Penicillium chrysogenum).